A 626-amino-acid polypeptide reads, in one-letter code: MCGIVGYIGPQGAAQILLQGLQKLEYRGYDSAGIATLNEGELLCVRAKGKLQNLVEKVEQLDIVAHVGIGHTRWATHGKPEEYNAHPHRDSRDRLAVVQNGIIENYRELRDQLQARGHIFRSETDTEVIPHLIAELLPETPTANGLLEAVRQAVHQLEGAFAIAVICADYPDELIVARQQAPLVIGFGQGEFFCASDTPAIIPYTRAVLPLENGELARLTPTGVEVYDFEGHRLRKTPRTLNWNPVMVEKQGFKHYMLKEIYEQPGVVRACLENYLRADWEVASPFSPVQLNLPPSLLDNLQHIQIVACGTSWHAGLVGKYLLEQVAQIPTSVQYASEFRYAPPPLLPHTLTIGVTQSGETADTLAALEMELKRRQGLDGALQPRLLGITNRPESSLGHLVPHIIDTRAGIEIGVAATKTFVAQLMAFYLLTLELSWQRQSCDRSRLAELVTGLRQLPAQMEQILESQERYIEALSHDFWETQDFIFLGRGINFPIALEGALKLKEISYIHAEGYPAGEMKHGPIALLDAKVPVVTIAMPGSVFEKVLSNAQEARARDARLIGVTPLDEAEAQHTFDNLLPVPEVDELLSPILTVIPLQLLAYHIAARRGLDVDQPRNLAKSVTVE.

Cys2 acts as the Nucleophile; for GATase activity in catalysis. A Glutamine amidotransferase type-2 domain is found at 2–222 (CGIVGYIGPQ…NGELARLTPT (221 aa)). 2 consecutive SIS domains span residues 293–441 (LPPS…QRQS) and 471–616 (YIEA…VDQP). The active-site For Fru-6P isomerization activity is Lys621.

In terms of assembly, homodimer.

The protein resides in the cytoplasm. It catalyses the reaction D-fructose 6-phosphate + L-glutamine = D-glucosamine 6-phosphate + L-glutamate. In terms of biological role, catalyzes the first step in hexosamine metabolism, converting fructose-6P into glucosamine-6P using glutamine as a nitrogen source. The protein is Glutamine--fructose-6-phosphate aminotransferase [isomerizing] of Thermosynechococcus vestitus (strain NIES-2133 / IAM M-273 / BP-1).